A 146-amino-acid chain; its full sequence is Putative pre-16S rRNA nuclease (146 aa).

It belongs to the YqgF nuclease family.

It is found in the cytoplasm. Its function is as follows. Could be a nuclease involved in processing of the 5'-end of pre-16S rRNA. The chain is Putative pre-16S rRNA nuclease from Burkholderia pseudomallei (strain 668).